The primary structure comprises 693 residues: MLKPIIHKFKYGKHNIILETGVIARQATASVLASMDDTTVLITIVSDNTTIPGQKFFPLVVNYQERTYAAGRIPGGFFRREGRPSENEILISRLIDRPIRPLFPKDFLYEVQIIATVISVNPQINPDIISIIGSSAALCLSGLPFLGPIGAARIGFLNNKYILNPSIEKIKKSSLDLVVSGTKNTIFMVEAEASILSEDNILNAILFGHESQQSLIDNIYLFSDKANKIPNIYKNIYKPDKQIFNLISKKIKKDINKAYYILKKKERLKKLNDIKQKVTSELLNNDSQLTSSKIEESIYFLERNIVRKRILKGKLRIDGRINNEVRKIDVRTGILPRVHGSALFTRGETQALVSATLGTSRDAQNLDDLLGDRTDNFLFHYNFPPYSVGEIGIVGSPKRREIGHGKLAKRSFLAVMPNIEDFPYTIRLVSEITESNGSSSMASVCGASLALMDAGVPIKSAIAGIAMGLIKENDSYIILSDILGDEDYLGDMDFKVSGSRLGITALQMDIKVSGITSDIIRSALYQAKSARLKILDIMENTLQIPRSDISKFAPRIYTIKINPEKIKDVIGKGGSIIRMLTEETGTVIEIKDDGIVKISAINGEKAKYAIKRIQEITEDIQIGKIYSGKVTRILDFGAFVSIGFGKEGLIHISQISNKRIDKVINHLKINQIIFVKVLEVDRQGRIRLSMKNI.

Residues aspartate 487 and aspartate 493 each contribute to the Mg(2+) site. Positions 554–613 (PRIYTIKINPEKIKDVIGKGGSIIRMLTEETGTVIEIKDDGIVKISAINGEKAKYAIKRI) constitute a KH domain. One can recognise an S1 motif domain in the interval 623-691 (GKIYSGKVTR…RQGRIRLSMK (69 aa)).

It belongs to the polyribonucleotide nucleotidyltransferase family. In terms of assembly, component of the RNA degradosome, which is a multiprotein complex involved in RNA processing and mRNA degradation. Mg(2+) serves as cofactor.

The protein localises to the cytoplasm. The enzyme catalyses RNA(n+1) + phosphate = RNA(n) + a ribonucleoside 5'-diphosphate. In terms of biological role, involved in mRNA degradation. Catalyzes the phosphorolysis of single-stranded polyribonucleotides processively in the 3'- to 5'-direction. This is Polyribonucleotide nucleotidyltransferase from Buchnera aphidicola subsp. Cinara cedri (strain Cc).